A 165-amino-acid chain; its full sequence is Transmembrane protein 128 (165 aa).

A run of 4 helical transmembrane segments spans residues 49–69, 81–101, 119–139, and 144–164; these read NIHSGFWILASIVVTYYVDFF, WFLFGSALLLVSVSIAFYCIV, LIPITTATFIVAGICFNVALW, and FFTPVLLFTQFMGVVMLTSLL.

The protein localises to the membrane. The chain is Transmembrane protein 128 (TMEM128) from Bos taurus (Bovine).